We begin with the raw amino-acid sequence, 209 residues long: Small ribosomal subunit protein uS4 (209 aa).

Residues 23-46 are disordered; that stretch reads SRNPLLKKPHPPGQHGMQRKKKSD. An S4 RNA-binding domain is found at 93 to 153; the sequence is CRLDNMVYRM…EKSKRLQSVK (61 aa).

The protein belongs to the universal ribosomal protein uS4 family. Part of the 30S ribosomal subunit. Contacts protein S5. The interaction surface between S4 and S5 is involved in control of translational fidelity.

In terms of biological role, one of the primary rRNA binding proteins, it binds directly to 16S rRNA where it nucleates assembly of the body of the 30S subunit. Functionally, with S5 and S12 plays an important role in translational accuracy. This is Small ribosomal subunit protein uS4 from Chlamydia pneumoniae (Chlamydophila pneumoniae).